We begin with the raw amino-acid sequence, 409 residues long: Phospholipase ABHD3 (409 aa).

The helical; Signal-anchor for type II membrane protein transmembrane segment at 26–46 threads the bilayer; it reads GFFGSGVGLSLILGFSVAYAF. The region spanning 140 to 233 is the AB hydrolase-1 domain; that stretch reads PTILLLPGLT…MLLLNYLGKI (94 aa). Catalysis depends on charge relay system residues S220, D346, and H375.

It belongs to the AB hydrolase superfamily. AB hydrolase 4 family.

The protein localises to the membrane. The enzyme catalyses a 1,2-diacyl-sn-glycero-3-phosphocholine + H2O = a 1-acyl-sn-glycero-3-phosphocholine + a fatty acid + H(+). It catalyses the reaction a 1,2-diacyl-sn-glycero-3-phosphocholine + H2O = a 2-acyl-sn-glycero-3-phosphocholine + a fatty acid + H(+). It carries out the reaction 1-tetradecanoyl-2-(9Z,12Z-octadecadienoyl)-sn-glycero-3-phosphocholine + H2O = 2-(9Z,12Z-octadecadienoyl)-sn-glycero-3-phosphocholine + tetradecanoate + H(+). The catalysed reaction is 1-tetradecanoyl-2-(9Z,12Z-octadecadienoyl)-sn-glycero-3-phosphocholine + H2O = 1-tetradecanoyl-sn-glycero-3-phosphocholine + (9Z,12Z)-octadecadienoate + H(+). The enzyme catalyses 1-tetradecanoyl-2-(5Z,8Z,11Z,14Z-eicosatetraenoyl)-sn-glycero-3-phosphocholine + H2O = 2-(5Z,8Z,11Z,14Z)-eicosatetraenoyl-sn-glycero-3-phosphocholine + tetradecanoate + H(+). It catalyses the reaction 1-tetradecanoyl-2-(4Z,7Z,10Z,13Z,16Z,19Z-docosahexaenoyl)-sn-glycero-3-phosphocholine + H2O = 2-(4Z,7Z,10Z,13Z,16Z,19Z-docosahexaenoyl)-sn-glycero-3-phosphocholine + tetradecanoate + H(+). It carries out the reaction 1,2-ditetradecanoyl-sn-glycero-3-phosphocholine + H2O = 2-tetradecanoyl-sn-glycero-3-phosphocholine + tetradecanoate + H(+). The catalysed reaction is 1-octadecanoyl-2-acetyl-sn-glycero-3-phosphocholine + H2O = 1-octadecanoyl-sn-glycero-3-phosphocholine + acetate + H(+). The enzyme catalyses 1,2-ditetradecanoyl-sn-glycero-3-phosphocholine + H2O = 1-tetradecanoyl-sn-glycero-3-phosphocholine + tetradecanoate + H(+). It catalyses the reaction 1-octadecanoyl-2-pentanoyl-sn-glycero-3-phosphocholine + H2O = pentanoate + 1-octadecanoyl-sn-glycero-3-phosphocholine + H(+). It carries out the reaction 1-octadecanoyl-2-hexanoyl-sn-glycero-3-phosphocholine + H2O = hexanoate + 1-octadecanoyl-sn-glycero-3-phosphocholine + H(+). The catalysed reaction is 1-octadecanoyl-2-octanoyl-sn-glycero-3-phosphocholine + H2O = 1-octadecanoyl-sn-glycero-3-phosphocholine + octanoate + H(+). The enzyme catalyses 1-octadecanoyl-2-nonanoyl-sn-glycero-3-phosphocholine + H2O = nonanoate + 1-octadecanoyl-sn-glycero-3-phosphocholine + H(+). It catalyses the reaction 1-O-hexadecyl-2-nonadioyl-sn-glycero-3-phosphocholine + H2O = nonanedioate + 1-O-hexadecyl-sn-glycero-3-phosphocholine + H(+). It carries out the reaction 1-hexadecanoyl-2-nonadioyl-sn-glycero-3-phosphocholine + H2O = nonanedioate + 1-hexadecanoyl-sn-glycero-3-phosphocholine + H(+). The catalysed reaction is 1-hexadecanoyl-2-(9-oxononanoyl)-sn-glycero-3-phosphocholine + H2O = 9-oxononanoate + 1-hexadecanoyl-sn-glycero-3-phosphocholine + H(+). The enzyme catalyses 1-hexadecanoyl-2-(5-oxopentanoyl)-sn-glycero-3-phosphocholine + H2O = 5-oxopentanoate + 1-hexadecanoyl-sn-glycero-3-phosphocholine + H(+). It catalyses the reaction 1-hexadecanoyl-2-glutaroyl-sn-glycero-3-phosphocholine + H2O = glutarate + 1-hexadecanoyl-sn-glycero-3-phosphocholine + H(+). It carries out the reaction 1-O-hexadecyl-2-acetyl-sn-glycero-3-phosphocholine + H2O = 1-O-hexadecyl-sn-glycero-3-phosphocholine + acetate + H(+). Phospholipase that may play a role in phospholipids remodeling. May selectively cleave myristate (C14)-containing phosphatidylcholines through its predominant phospholipase 1 activity, cleaving preferentially acyl groups in sn1 position. In parallel, may have a minor phospholipase 2 activity acting on acyl groups in position sn2. In addition to (C14)-containing phosphatidylcholines, may also act on other medium-chain-containing and oxidatively truncated phospholipids. This Homo sapiens (Human) protein is Phospholipase ABHD3.